A 727-amino-acid polypeptide reads, in one-letter code: Glycerol-3-phosphate dehydrogenase, mitochondrial (727 aa).

The transit peptide at 1 to 42 directs the protein to the mitochondrion; sequence MAFQKAVKGTILVGGGALATVLGLSPFAHYRRKQVSLAYVEA. Residue 71–99 coordinates FAD; the sequence is DILVIGGGATGCGCALDAVTRGLKTALVE. Y601 is subject to Phosphotyrosine. 2 EF-hand domains span residues 623–658 and 659–694; these read SDID…INVQ and MDEN…VQKG. Residues D672, N674, N676, Q678, and E683 each contribute to the Ca(2+) site.

This sequence belongs to the FAD-dependent glycerol-3-phosphate dehydrogenase family. FAD serves as cofactor.

It localises to the mitochondrion inner membrane. It catalyses the reaction a quinone + sn-glycerol 3-phosphate = dihydroxyacetone phosphate + a quinol. It functions in the pathway polyol metabolism; glycerol degradation via glycerol kinase pathway; glycerone phosphate from sn-glycerol 3-phosphate (anaerobic route): step 1/1. Its activity is regulated as follows. Calcium-binding enhance the activity of the enzyme. Calcium-responsive mitochondrial glycerol-3-phosphate dehydrogenase which seems to be a key component of the pancreatic beta-cell glucose-sensing device. In Mus musculus (Mouse), this protein is Glycerol-3-phosphate dehydrogenase, mitochondrial.